Consider the following 439-residue polypeptide: Glutamate--tRNA ligase 2 (439 aa).

The short motif at 9–19 (PSPTGHLHVGN) is the 'HIGH' region element. The 'KMSKS' region signature appears at 233-237 (KLSKR). Lysine 236 is a binding site for ATP.

It belongs to the class-I aminoacyl-tRNA synthetase family. Glutamate--tRNA ligase type 1 subfamily. As to quaternary structure, monomer.

Its subcellular location is the cytoplasm. The catalysed reaction is tRNA(Glu) + L-glutamate + ATP = L-glutamyl-tRNA(Glu) + AMP + diphosphate. In terms of biological role, catalyzes the attachment of glutamate to tRNA(Glu) in a two-step reaction: glutamate is first activated by ATP to form Glu-AMP and then transferred to the acceptor end of tRNA(Glu). In Sphingopyxis alaskensis (strain DSM 13593 / LMG 18877 / RB2256) (Sphingomonas alaskensis), this protein is Glutamate--tRNA ligase 2.